The chain runs to 185 residues: MINEIYENSNSRMKKSIDFFKKNISKIRTNRVSPSLIENIYINCYGTSVPLSKLSNILSEKSNILKINVFDNNIIKKIEQAILSSDLGVNPQIQENYIRIEFPKLTEARRFELIKLINKEAEQNIISIRNIRRDANEKIKKLIKAKTIGKDEDKKFQEVIQNLTNSRIEDTKKILKLKEKEIKKI.

This sequence belongs to the RRF family.

Its subcellular location is the cytoplasm. Functionally, responsible for the release of ribosomes from messenger RNA at the termination of protein biosynthesis. May increase the efficiency of translation by recycling ribosomes from one round of translation to another. This is Ribosome-recycling factor from Wigglesworthia glossinidia brevipalpis.